Reading from the N-terminus, the 117-residue chain is Large ribosomal subunit protein bL20c (117 aa).

Belongs to the bacterial ribosomal protein bL20 family.

It is found in the plastid. The protein localises to the chloroplast. Binds directly to 23S ribosomal RNA and is necessary for the in vitro assembly process of the 50S ribosomal subunit. It is not involved in the protein synthesizing functions of that subunit. This chain is Large ribosomal subunit protein bL20c, found in Olimarabidopsis pumila (Dwarf rocket).